Reading from the N-terminus, the 142-residue chain is Protein SprT-like (142 aa).

The SprT-like domain occupies 4–138; the sequence is YVKKVSIEDF…FACGYCHGRL (135 aa). Histidine 62 serves as a coordination point for Zn(2+). Glutamate 63 is a catalytic residue. Histidine 66 contacts Zn(2+).

It belongs to the SprT family. It depends on Zn(2+) as a cofactor.

Its subcellular location is the cytoplasm. The polypeptide is Protein SprT-like (Streptococcus agalactiae serotype Ia (strain ATCC 27591 / A909 / CDC SS700)).